The sequence spans 239 residues: Increased recombination centers protein 22-1 (239 aa).

An N-terminal signal peptide occupies residues methionine 1–glycine 19. Topologically, residues tyrosine 20–leucine 161 are lumenal. A helical membrane pass occupies residues isoleucine 162–isoleucine 182. Over tryptophan 183–asparagine 239 the chain is Cytoplasmic. Residues alanine 201–serine 213 show a composition bias toward low complexity. The segment at alanine 201–threonine 222 is disordered.

Belongs to the IRC22 family.

The protein localises to the endoplasmic reticulum membrane. Its function is as follows. Is probably involved in a pathway contributing to genomic integrity. The sequence is that of Increased recombination centers protein 22-1 (IRC22-1) from Candida albicans (strain WO-1) (Yeast).